The primary structure comprises 80 residues: Large ribosomal subunit protein uL24 (80 aa).

The protein belongs to the universal ribosomal protein uL24 family. As to quaternary structure, part of the 50S ribosomal subunit.

Functionally, one of two assembly initiator proteins, it binds directly to the 5'-end of the 23S rRNA, where it nucleates assembly of the 50S subunit. Its function is as follows. One of the proteins that surrounds the polypeptide exit tunnel on the outside of the subunit. The polypeptide is Large ribosomal subunit protein uL24 (Chlorobium phaeobacteroides (strain DSM 266 / SMG 266 / 2430)).